Here is a 554-residue protein sequence, read N- to C-terminus: MASPPAHRSSKAADEELPKASSTFHPSLWGSFFLTYQPPTAPQRANMKERAEVLRERVRKVLKGSTTDQLPETVNLILTLQRLGLGYYYENEIDKLLHQIYSNSDYNVKDLNLVSQRFYLLRKNGYDVPSDVFLSFKTEEGGFACAAADTRSLLSLYNAAYLWKHGEEVLDEAISSTRLRLQDLLGRLLPESPFAKEVSSSLRTPLFRRVGILEARNYIPIYETEATRNEAVLELAKLNFNLQQLDFCEELKHCSAWWNEMIAKSKLTFVRDRIVEEYFWMNGACYDPPYSLSRIILTKITGLITIIDDMFDTHGTTEDCMKFAEAFGRWDESAIHLLPEYMKDFYILMLETFQSFEDALGPEKSYRVLYLKQAMERLVELYTKEIKWRDEDYVATMSEHLQVSAESIGANALTCSAYAGMGDMSITKETFEWALSFPQFIRTFGSFVRLSNDVVSTKREQTKDHSPSTVHCYMKEHGITMDDACEKIKELIEDSWKDMLEQSLALKGLPKVVPQLVFDFSRTTDNMYRDRDALTSSEALKEMIQLLFVEPIPE.

Positions 308 and 312 each coordinate Mg(2+). Residues Asp308, Asp312, Arg449, and Asn452 each contribute to the substrate site. The short motif at 308–312 (DDMFD) is the DDXXD motif element. Positions 452, 456, and 460 each coordinate Mg(2+).

It belongs to the terpene synthase family. In terms of assembly, monomer. Mg(2+) is required as a cofactor. It depends on Mn(2+) as a cofactor.

It is found in the cytoplasm. Its pathway is secondary metabolite biosynthesis; terpenoid biosynthesis. Functionally, non-functional sesquiterpene synthase having less than 1% of the activity found in TPS5A. This is Inactive sesquithujene synthase B from Zea mays (Maize).